Reading from the N-terminus, the 409-residue chain is Transforming growth factor beta-3 proprotein (409 aa).

The signal sequence occupies residues 1–21 (MHLQRALVVLALLNFATVSLS). Asn72, Asn133, and Asn140 each carry an N-linked (GlcNAc...) asparagine glycan. Residues 259-261 (RGD) carry the Cell attachment site motif. Cystine bridges form between Cys304-Cys313, Cys312-Cys375, Cys341-Cys406, and Cys345-Cys408.

This sequence belongs to the TGF-beta family. As to quaternary structure, interacts with ASPN. Latency-associated peptide: Homodimer; disulfide-linked. Latency-associated peptide: Interacts with Transforming growth factor beta-3 (TGF-beta-3) chain; interaction is non-covalent and maintains (TGF-beta-3) in a latent state. Latency-associated peptide: Interacts with LRRC32/GARP; leading to regulate activation of TGF-beta-3 and promote epithelial fusion during palate development. Latency-associated peptide: Interacts (via cell attachment site) with integrins, leading to release of the active TGF-beta-3. Transforming growth factor beta-3: Homodimer; disulfide-linked. Transforming growth factor beta-3: Interacts with TGF-beta receptors (TGFBR1 and TGFBR2), leading to signal transduction. Post-translationally, transforming growth factor beta-3 proprotein: The precursor proprotein is cleaved in the Golgi apparatus to form Transforming growth factor beta-3 (TGF-beta-3) and Latency-associated peptide (LAP) chains, which remain non-covalently linked, rendering TGF-beta-3 inactive.

Its subcellular location is the secreted. It is found in the extracellular space. It localises to the extracellular matrix. Functionally, transforming growth factor beta-3 proprotein: Precursor of the Latency-associated peptide (LAP) and Transforming growth factor beta-3 (TGF-beta-3) chains, which constitute the regulatory and active subunit of TGF-beta-3, respectively. In terms of biological role, required to maintain the Transforming growth factor beta-3 (TGF-beta-3) chain in a latent state during storage in extracellular matrix. Associates non-covalently with TGF-beta-3 and regulates its activation via interaction with 'milieu molecules', such as LTBP1 and LRRC32/GARP, that control activation of TGF-beta-3. Interaction with integrins results in distortion of the Latency-associated peptide chain and subsequent release of the active TGF-beta-3. Transforming growth factor beta-3: Multifunctional protein that regulates embryogenesis and cell differentiation and is required in various processes such as secondary palate development. Activation into mature form follows different steps: following cleavage of the proprotein in the Golgi apparatus, Latency-associated peptide (LAP) and Transforming growth factor beta-3 (TGF-beta-3) chains remain non-covalently linked rendering TGF-beta-3 inactive during storage in extracellular matrix. At the same time, LAP chain interacts with 'milieu molecules', such as LTBP1 and LRRC32/GARP that control activation of TGF-beta-3 and maintain it in a latent state during storage in extracellular milieus. TGF-beta-3 is released from LAP by integrins: integrin-binding results in distortion of the LAP chain and subsequent release of the active TGF-beta-3. Once activated following release of LAP, TGF-beta-3 acts by binding to TGF-beta receptors (TGFBR1 and TGFBR2), which transduce signal. This chain is Transforming growth factor beta-3 proprotein (TGFB3), found in Sus scrofa (Pig).